The primary structure comprises 505 residues: MVSIRPDEISQIIRDQIEQYEQDVKVSNVGTVLQVGDGIARVYGLDKVMAGELVEFADGTVGIAQNLEEDNVGAVLMGEGREIQEGSAVTATGRIAQVPVGDALVGRVVDGLGRPIDGKGEMKTTDSRLLESPAPGIIDRRSVYEPMQTGITAIDSMIPIGRGQRELIIGDRQTGKTAIAIDTIINQKGEDVICVYVAIGQKASTVAQVVGTLEEKGALDYTVIVAANASDPATLQYLAPYTGATIAEYFMYKGKATLVIYDDLSKQAQAYRQVSLLLRRPPGREAYPGDVFYLHSRLLERAAKLNDKLGGGSMTALPIIETQAGDVSAYIPTNVISITDGQIFLSSDLFNAGFRPAVNAGISVSRVGSAAQTKAIKKVAGKIKLELAQFAELEAFSQFASDLDKATQNQLARGQRLREILKQPQNSPRSLPEQVAAIYSGINGYLDDIPLEKAAKFIAGLLDYLNNSKPKFGEIIKTEKVLTDEAQTLLKEGITEYKQTFLVSA.

An ATP-binding site is contributed by 170 to 177; sequence GDRQTGKT.

It belongs to the ATPase alpha/beta chains family. F-type ATPases have 2 components, CF(1) - the catalytic core - and CF(0) - the membrane proton channel. CF(1) has five subunits: alpha(3), beta(3), gamma(1), delta(1), epsilon(1). CF(0) has four main subunits: a(1), b(1), b'(1) and c(9-12).

The protein localises to the cellular thylakoid membrane. The catalysed reaction is ATP + H2O + 4 H(+)(in) = ADP + phosphate + 5 H(+)(out). Its function is as follows. Produces ATP from ADP in the presence of a proton gradient across the membrane. The alpha chain is a regulatory subunit. This is ATP synthase subunit alpha from Trichodesmium erythraeum (strain IMS101).